Reading from the N-terminus, the 195-residue chain is Segregation and condensation protein B (195 aa).

The segment at 169-195 (LEDVAASQENSREAGGRGSIPGHPGEE) is disordered.

The protein belongs to the ScpB family. Homodimer. Homodimerization may be required to stabilize the binding of ScpA to the Smc head domains. Component of a cohesin-like complex composed of ScpA, ScpB and the Smc homodimer, in which ScpA and ScpB bind to the head domain of Smc. The presence of the three proteins is required for the association of the complex with DNA.

It is found in the cytoplasm. Functionally, participates in chromosomal partition during cell division. May act via the formation of a condensin-like complex containing Smc and ScpA that pull DNA away from mid-cell into both cell halves. The chain is Segregation and condensation protein B from Moorella thermoacetica (strain ATCC 39073 / JCM 9320).